The sequence spans 192 residues: dCTP deaminase, dUMP-forming (192 aa).

Residues 101-106 (KSSLGR), D119, 127-129 (TLE), Q148, Y162, and Q174 contribute to the dCTP site. E129 serves as the catalytic Proton donor/acceptor. Residues 162–192 (YGSGADGSRYQGQRGPTASRSHVKFHRTHVE) form a disordered region. Residues 171-181 (YQGQRGPTASR) are compositionally biased toward polar residues. Over residues 182–192 (SHVKFHRTHVE) the composition is skewed to basic residues.

It belongs to the dCTP deaminase family. As to quaternary structure, homotrimer.

It carries out the reaction dCTP + 2 H2O = dUMP + NH4(+) + diphosphate. The protein operates within pyrimidine metabolism; dUMP biosynthesis; dUMP from dCTP: step 1/1. In terms of biological role, bifunctional enzyme that catalyzes both the deamination of dCTP to dUTP and the hydrolysis of dUTP to dUMP without releasing the toxic dUTP intermediate. The sequence is that of dCTP deaminase, dUMP-forming from Beutenbergia cavernae (strain ATCC BAA-8 / DSM 12333 / CCUG 43141 / JCM 11478 / NBRC 16432 / NCIMB 13614 / HKI 0122).